We begin with the raw amino-acid sequence, 551 residues long: Hedycaryol synthase TPS20CT (551 aa).

(2E,6E)-farnesyl diphosphate contacts are provided by arginine 266, aspartate 303, aspartate 307, arginine 444, and aspartate 447. Mg(2+)-binding residues include aspartate 303 and aspartate 307. The DDXXD motif motif lies at 303–307 (DDIYD). Mg(2+) is bound by residues aspartate 447, serine 451, and glutamate 455.

Belongs to the terpene synthase family. Tpsb subfamily. Mg(2+) is required as a cofactor. Requires Mn(2+) as cofactor. As to expression, highly expressed in glandular trichomes.

The enzyme catalyses (2E,6E)-farnesyl diphosphate + H2O = (2E,6E)-hedycaryol + diphosphate. Its pathway is secondary metabolite biosynthesis; terpenoid biosynthesis. In terms of biological role, involved in sesquiterpene olefins biosynthesis, constituants of cannabinoids and terpenoids-rich resins. Catalyzes primarily the conversion of (2E)-farnesyl diphosphate to hedycaryol, which is spontaneously converted to elemol as a thermal degradation product. The chain is Hedycaryol synthase TPS20CT from Cannabis sativa (Hemp).